A 196-amino-acid chain; its full sequence is Carnitine operon protein CaiE (196 aa).

Positions 177–196 (RQMEENRPRLQGTTDVMPKR) are disordered.

The protein belongs to the transferase hexapeptide repeat family.

It functions in the pathway amine and polyamine metabolism; carnitine metabolism. Its function is as follows. Overproduction of CaiE stimulates the activity of CaiB and CaiD. This Escherichia coli O17:K52:H18 (strain UMN026 / ExPEC) protein is Carnitine operon protein CaiE.